Reading from the N-terminus, the 189-residue chain is Peptide deformylase (189 aa).

Fe cation is bound by residues Cys98 and His140. Residue Glu141 is part of the active site. His144 is a Fe cation binding site.

It belongs to the polypeptide deformylase family. Requires Fe(2+) as cofactor.

The enzyme catalyses N-terminal N-formyl-L-methionyl-[peptide] + H2O = N-terminal L-methionyl-[peptide] + formate. In terms of biological role, removes the formyl group from the N-terminal Met of newly synthesized proteins. Requires at least a dipeptide for an efficient rate of reaction. N-terminal L-methionine is a prerequisite for activity but the enzyme has broad specificity at other positions. This Porphyromonas gingivalis (strain ATCC 33277 / DSM 20709 / CIP 103683 / JCM 12257 / NCTC 11834 / 2561) protein is Peptide deformylase.